The chain runs to 510 residues: MIWHVQNENFILDSTRIFMKAFHLLLFHGSFIFPECILIFGLILLLMIDSTSDQKDRPWFYFISSTSLVMSITALLFRWKEEPIISFSGNFQTNNFNEIFQFLILLCSTLCIPLSVEYIECTEMAITEFLLFVLTATLGGMFLCGANDLITIFVAPECFSLCSYLLSGYTKRDVRSNEATTKYLLMGGASSSILVHGFSWLYGSSGGEIELQEIVNGLINTQMYNSPGISIALISTTVGIGFKLSPAPFHQWTPDVYEGSPTPVVAFLSVTSKVAASASATRIFDIPFYFSSNEWHLLLEILAILSMILGNLIAITQTSMKRMLAYSSIGQIGYVIIGIIVGDSNDGYASMITYMLFYISMNLGTFARIVSFGLRTGTDNIRDYAGLYTKDPFLALSSALCLLSLGGLPPLAGFFGKLHLFWCGWQAGLYFLVSIGLLTSVVSIYYYLKIIKLLMTGRNQEITPHVRNYRRSPLRSNNSIEWSMTVCVIASTIPGISMNPILAIAQDTLF.

Helical transmembrane passes span 24–44 (LLLF…GLIL), 59–79 (WFYF…LFRW), 99–119 (IFQF…VEYI), 124–144 (MAIT…MFLC), 149–169 (LITI…LSGY), 183–203 (YLLM…WLYG), 295–315 (WHLL…LIAI), 323–343 (MLAY…IVGD), 347–367 (GYAS…GTFA), 395–415 (ALSS…AGFF), and 418–438 (LHLF…IGLL).

It belongs to the complex I subunit 2 family. NDH is composed of at least 16 different subunits, 5 of which are encoded in the nucleus.

The protein resides in the plastid. Its subcellular location is the chloroplast thylakoid membrane. The enzyme catalyses a plastoquinone + NADH + (n+1) H(+)(in) = a plastoquinol + NAD(+) + n H(+)(out). The catalysed reaction is a plastoquinone + NADPH + (n+1) H(+)(in) = a plastoquinol + NADP(+) + n H(+)(out). In terms of biological role, NDH shuttles electrons from NAD(P)H:plastoquinone, via FMN and iron-sulfur (Fe-S) centers, to quinones in the photosynthetic chain and possibly in a chloroplast respiratory chain. The immediate electron acceptor for the enzyme in this species is believed to be plastoquinone. Couples the redox reaction to proton translocation, and thus conserves the redox energy in a proton gradient. The protein is NAD(P)H-quinone oxidoreductase subunit 2, chloroplastic of Maianthemum racemosum (False Solomon's-seal).